The primary structure comprises 398 residues: O-methyltransferase hmp5 (398 aa).

S-adenosyl-L-methionine is bound by residues 233 to 234 (GG), E261, and 283 to 284 (DF). H303 serves as the catalytic Proton acceptor.

It belongs to the class I-like SAM-binding methyltransferase superfamily. Cation-independent O-methyltransferase family.

Its pathway is secondary metabolite biosynthesis. Functionally, O-methyltransferase; part of the gene cluster that mediates the biosynthesis of hypothemycin, a resorcylic acid lactone (RAL) that irreversibly inhibits a subset of protein kinases with a conserved cysteine in the ATP binding site such as human ERK2. The first step is performed by both PKSs hmp3 and hmp8 and leads to the production of 7',8'-dehydrozearalenol (DHZ). The highly reducing PKS hpm8 synthesizes the reduced hexaketide (7S,11S,2E,8E)-7,11-dihydroxy-dodeca-2,8-dienoate, which is transferred downstream to the non-reducing PKS hpm3. Hpm3 then extends the reduced hexaketide to a nonaketide, after which regioselective cyclization and macrolactonization affords DHZ. The next step is the conversion of DHZ into aigialomycin C and is performed by the O-methyltransferase hmp5, the FAD-binding monooxygenase hmp7, and the cytochrome P450 monooxygenase hmp1. The wide substrate tolerance of the hmp5 and hmp7 implies that the reactions from DHZ to aigialomycin C can occur in any order. The steps from aigialomycin C to hypothemycin are less well established. The FAD-linked oxidoreductase hmp9 presumably catalyzes oxidation of the C-6' hydroxyl to a ketone. The timing of this oxidation is important, since the resulting enone functional group is a Michael acceptor that can react spontaneously with glutathione, an abundant metabolite in fungal cells. The glutathione S-transferase hmp2 catalyzes cis-trans isomerization of the 7',8' double bond with equilibrium favoring the trans isomer. The hpm6-encoded transporter might preferentially pump hypothemycin out of the cell relative to the trans isomer aigialomycin A. The cis-to-trans isomerization may be coupled with C-4' hydroxylation, since all known hypothemycin analogs containing the enone functional group also have hydroxyl groups at both C-4' and C-5'. The protein is O-methyltransferase hmp5 of Hypomyces subiculosus (Nectria subiculosa).